The chain runs to 339 residues: 4-hydroxythreonine-4-phosphate dehydrogenase (339 aa).

Residues His-141 and Thr-142 each contribute to the substrate site. Positions 171, 215, and 270 each coordinate a divalent metal cation. 3 residues coordinate substrate: Lys-278, Asn-287, and Arg-296.

The protein belongs to the PdxA family. Homodimer. It depends on Zn(2+) as a cofactor. Requires Mg(2+) as cofactor. The cofactor is Co(2+).

The protein localises to the cytoplasm. The enzyme catalyses 4-(phosphooxy)-L-threonine + NAD(+) = 3-amino-2-oxopropyl phosphate + CO2 + NADH. The protein operates within cofactor biosynthesis; pyridoxine 5'-phosphate biosynthesis; pyridoxine 5'-phosphate from D-erythrose 4-phosphate: step 4/5. In terms of biological role, catalyzes the NAD(P)-dependent oxidation of 4-(phosphooxy)-L-threonine (HTP) into 2-amino-3-oxo-4-(phosphooxy)butyric acid which spontaneously decarboxylates to form 3-amino-2-oxopropyl phosphate (AHAP). The sequence is that of 4-hydroxythreonine-4-phosphate dehydrogenase from Geobacter metallireducens (strain ATCC 53774 / DSM 7210 / GS-15).